The sequence spans 325 residues: Oligopeptide transport system permease protein OppB (325 aa).

A run of 6 helical transmembrane segments spans residues 12 to 32 (YLVLLALASFLTYCLTSLAFS), 102 to 122 (LVVGSVFGTVAGVVIGAWGAI), 135 to 155 (LALLVLSTPTFVVANLLILGA), 189 to 208 (LQHLILPSLTLALAAAAGFS), 248 to 268 (IPMATLFAYGVAGLVTGAVFV), and 290 to 310 (TNIVAAITVFSGAVVLLAGLL). The ABC transmembrane type-1 domain maps to 95–311 (IGVSLRLLVV…AVVLLAGLLS (217 aa)).

It belongs to the binding-protein-dependent transport system permease family. OppBC subfamily. In terms of assembly, the complex is composed of an ATP-binding protein (OppD), two transmembrane proteins (OppB and OppC) and a solute-binding protein (OppA).

Its subcellular location is the cell inner membrane. Part of the ABC transporter complex OppABCD involved in the uptake of oligopeptides. Responsible for the translocation of the substrate across the membrane. This chain is Oligopeptide transport system permease protein OppB, found in Mycobacterium bovis (strain ATCC BAA-935 / AF2122/97).